The primary structure comprises 268 residues: DNA ligase (268 aa).

Residue Lys-41 is the N6-AMP-lysine intermediate of the active site. Positions 111, 181, and 187 each coordinate ATP.

It belongs to the ATP-dependent DNA ligase family. Requires a divalent metal cation as cofactor.

The catalysed reaction is ATP + (deoxyribonucleotide)n-3'-hydroxyl + 5'-phospho-(deoxyribonucleotide)m = (deoxyribonucleotide)n+m + AMP + diphosphate.. Catalyzes efficient strand joining on a single nicked DNA. This is DNA ligase (ligA) from Haemophilus influenzae (strain ATCC 51907 / DSM 11121 / KW20 / Rd).